Consider the following 601-residue polypeptide: Terpinolene synthase, chloroplastic (601 aa).

A chloroplast-targeting transit peptide spans 1–32; the sequence is MSTFVISNSMHVGISFSFLHKLPQTPPPQVVC. Residues Asp354, Asp358, Asp498, Thr502, and Glu506 each coordinate Mg(2+). Positions 354-358 match the DDXXD motif motif; the sequence is DDVYD.

It belongs to the terpene synthase family. Tpsd subfamily. Mg(2+) is required as a cofactor. The cofactor is Mn(2+).

The protein resides in the plastid. The protein localises to the chloroplast. The catalysed reaction is (2E)-geranyl diphosphate = terpinolene + diphosphate. Its pathway is secondary metabolite biosynthesis; terpenoid biosynthesis. Functionally, monoterpene synthase that catalyzes the formation of terpinolene and other monoterpenes from geranyl diphosphate. The polypeptide is Terpinolene synthase, chloroplastic (TES) (Ocimum basilicum (Sweet basil)).